We begin with the raw amino-acid sequence, 3127 residues long: Probable polyketide synthase 33 (3127 aa).

Positions 24 to 457 (SGDVAVVGIG…GSNVCLILSE (434 aa)) constitute a Ketosynthase family 3 (KS3) domain. Residues Cys196, His335, and His380 each act as for beta-ketoacyl synthase activity in the active site. Residues 660 to 693 (GVSADIIIGHSLGEISSAYCSGMIDFQTLCYLTY) form an acyl/malonyl transferase region. Ser670 (for acyl/malonyl transferase activity) is an active-site residue. Residues 958–1080 (GPSIHSLGNN…GNFSLFKHNI (123 aa)) form an N-terminal hotdog fold region. A PKS/mFAS DH domain is found at 958 to 1257 (GPSIHSLGNN…CTIVGSNPDS (300 aa)). The active-site Proton acceptor; for dehydratase activity is the His992. Residues 1096–1257 (NFTTISKQDF…CTIVGSNPDS (162 aa)) are C-terminal hotdog fold. The active-site Proton donor; for dehydratase activity is the Asp1168. The segment at 1369 to 1394 (SNNNNNNNNNNNNNNNNNNNNKNNGY) is disordered. Residues 1370–1394 (NNNNNNNNNNNNNNNNNNNNKNNGY) show a composition bias toward low complexity. The 78-residue stretch at 2539-2616 (SNNEIIRSTI…QSIEIIKSAH (78 aa)) folds into the Carrier domain. Position 2576 is an O-(pantetheine 4'-phosphoryl)serine (Ser2576). Residues 2617–2659 (NKNNNNNNINNNNNNNNNNNNNNNNNNNNNNNNNNNNNNNNNN) are disordered. A coiled-coil region spans residues 2617–2671 (NKNNNNNNINNNNNNNNNNNNNNNNNNNNNNNNNNNNNNNNNNLVKKEQQSLDEF). A helical transmembrane segment spans residues 2937–2957 (VLTLYNIPITIFIAILIIDIF).

The cofactor is pantetheine 4'-phosphate.

Its subcellular location is the membrane. Its function is as follows. Probable polyketide synthase. The protein is Probable polyketide synthase 33 (pks33) of Dictyostelium discoideum (Social amoeba).